The sequence spans 275 residues: Hydroxyethylthiazole kinase (275 aa).

Met50 serves as a coordination point for substrate. Arg126 and Ser171 together coordinate ATP. Ala200 contacts substrate.

It belongs to the Thz kinase family. The cofactor is Mg(2+).

It carries out the reaction 5-(2-hydroxyethyl)-4-methylthiazole + ATP = 4-methyl-5-(2-phosphooxyethyl)-thiazole + ADP + H(+). Its pathway is cofactor biosynthesis; thiamine diphosphate biosynthesis; 4-methyl-5-(2-phosphoethyl)-thiazole from 5-(2-hydroxyethyl)-4-methylthiazole: step 1/1. Functionally, catalyzes the phosphorylation of the hydroxyl group of 4-methyl-5-beta-hydroxyethylthiazole (THZ). This is Hydroxyethylthiazole kinase from Acinetobacter baumannii (strain ATCC 17978 / DSM 105126 / CIP 53.77 / LMG 1025 / NCDC KC755 / 5377).